We begin with the raw amino-acid sequence, 117 residues long: Ribulose bisphosphate carboxylase small subunit 1 (117 aa).

Belongs to the RuBisCO small chain family. Heterohexadecamer of 8 large and 8 small subunits.

Functionally, ruBisCO catalyzes two reactions: the carboxylation of D-ribulose 1,5-bisphosphate, the primary event in carbon dioxide fixation, as well as the oxidative fragmentation of the pentose substrate. Both reactions occur simultaneously and in competition at the same active site. Although the small subunit is not catalytic it is essential for maximal activity. In Hydrogenovibrio marinus, this protein is Ribulose bisphosphate carboxylase small subunit 1.